The chain runs to 80 residues: Cell division activator CedA (80 aa).

This sequence belongs to the CedA family.

Functionally, activates the cell division inhibited by chromosomal DNA over-replication. In Escherichia coli O139:H28 (strain E24377A / ETEC), this protein is Cell division activator CedA.